We begin with the raw amino-acid sequence, 29 residues long: 28 kDa protein (29 aa).

The polypeptide is 28 kDa protein (Tritrichomonas foetus (Trichomonas foetus)).